The chain runs to 166 residues: Phosphopantetheine adenylyltransferase (166 aa).

S11 serves as a coordination point for substrate. Residues 11-12 (SF) and H19 each bind ATP. Residues K43, V80, and R94 each coordinate substrate. Residues 95 to 97 (GLR), E105, and 130 to 136 (VRTITAT) each bind ATP.

It belongs to the bacterial CoaD family. Homohexamer. Requires Mg(2+) as cofactor.

It is found in the cytoplasm. The catalysed reaction is (R)-4'-phosphopantetheine + ATP + H(+) = 3'-dephospho-CoA + diphosphate. The protein operates within cofactor biosynthesis; coenzyme A biosynthesis; CoA from (R)-pantothenate: step 4/5. In terms of biological role, reversibly transfers an adenylyl group from ATP to 4'-phosphopantetheine, yielding dephospho-CoA (dPCoA) and pyrophosphate. The sequence is that of Phosphopantetheine adenylyltransferase from Mesorhizobium japonicum (strain LMG 29417 / CECT 9101 / MAFF 303099) (Mesorhizobium loti (strain MAFF 303099)).